We begin with the raw amino-acid sequence, 251 residues long: NADPH-dependent oxidoreductase (251 aa).

This sequence belongs to the flavin oxidoreductase frp family. The cofactor is FMN.

Reduces FMN, organic nitro compounds and disulfide DTNB. Involved in maintenance of the cellular redox state and the disulfide stress response. The protein is NADPH-dependent oxidoreductase (nfrA) of Staphylococcus epidermidis (strain ATCC 12228 / FDA PCI 1200).